Consider the following 338-residue polypeptide: Mitoferrin-1 (338 aa).

The disordered stretch occupies residues 1-37; it reads MELRRGGVGSQAAGRRMDGDCRDGGCGSKDAGSEDYE. 3 Solcar repeats span residues 43-131, 141-225, and 232-326; these read ASVS…MKRT, NSHL…LQEQ, and YNPQ…FKYF. A run of 6 helical transmembrane segments spans residues 45 to 64, 106 to 125, 143 to 162, 200 to 219, 234 to 253, and 301 to 320; these read VSTH…SIMY, GLNV…FACY, HLAN…AVMN, SYTT…FITY, PQSH…AATT, and GIQA…WSVY.

It belongs to the mitochondrial carrier (TC 2.A.29) family. Interacts with ACB10; this interaction stabilizes SLC25A37 and enhances the function of SLC25A37 to import mitochondrial iron during erythroid differentiation.

It localises to the mitochondrion inner membrane. The catalysed reaction is Fe(2+)(in) = Fe(2+)(out). Its function is as follows. Mitochondrial iron transporter that specifically mediates iron uptake in developing erythroid cells, thereby playing an essential role in heme biosynthesis. This chain is Mitoferrin-1 (Slc25a37), found in Rattus norvegicus (Rat).